Here is a 169-residue protein sequence, read N- to C-terminus: Allophycocyanin subunit beta-18 (169 aa).

Asparagine 72 bears the N4-methylasparagine mark. Position 82 (cysteine 82) interacts with (2R,3E)-phycocyanobilin.

It belongs to the phycobiliprotein family. As to quaternary structure, heterodimer of ApcE and this beta chain. Post-translationally, contains one covalently linked bilin chromophore. The chromophore is added by phycocyanobilin lyase CpcS 1.

It is found in the cellular thylakoid membrane. In terms of biological role, a variant beta-allophycocyanin (AP) which forms a complex with ApcE, a phycobilisome terminal emitter that influences energy transfer to photosystem II. In Nostoc sp. (strain PCC 7120 / SAG 25.82 / UTEX 2576), this protein is Allophycocyanin subunit beta-18 (apcF).